Here is a 211-residue protein sequence, read N- to C-terminus: Claudin-7 (211 aa).

The Cytoplasmic segment spans residues 1–7; it reads MANSGLQ. The helical transmembrane segment at 8-28 threads the bilayer; that stretch reads LLGFSMAMLGWVGLIASTAIP. Over 29–81 the chain is Extracellular; sequence QWQMSSYAGDNIITAQAMYKGLWMECVTQSTGMMSCKMYDSVLALPGALQATR. A helical membrane pass occupies residues 82–102; it reads ALMVVSLVLGFLAMFVATMGM. Residues 103–119 are Cytoplasmic-facing; sequence KCTRCGGDDKAKKARIA. Residues 120–140 form a helical membrane-spanning segment; sequence MTGGIVFIVAGLAALVACSWI. The Extracellular portion of the chain corresponds to 141 to 160; sequence GHQIVTDFYNPLTPMNVKYE. The helical transmembrane segment at 161–181 threads the bilayer; the sequence is FGPAIFIGWAGSALVLLGGAL. The Cytoplasmic portion of the chain corresponds to 182-211; sequence LSCSCPGSESKAAYRAPRSYPKSNSSKEYV. The tract at residues 210-211 is interactions with TJP1, TJP2 and TJP3; sequence YV.

This sequence belongs to the claudin family. In terms of assembly, directly interacts with TJP1/ZO-1, TJP2/ZO-2 and TJP3/ZO-3. The phosphorylated form interacts with EPCAM. In terms of processing, phosphorylated. In terms of tissue distribution, expressed predominantly in lung and kidney.

It is found in the cell membrane. The protein localises to the basolateral cell membrane. Its subcellular location is the cell junction. It localises to the tight junction. Its function is as follows. Plays a major role in tight junction-specific obliteration of the intercellular space, through calcium-independent cell-adhesion activity. This chain is Claudin-7 (Cldn7), found in Mus musculus (Mouse).